We begin with the raw amino-acid sequence, 436 residues long: DNA primase DnaG (436 aa).

One can recognise a Toprim domain in the interval 169–243 (DSIIVVEGRA…DIDYVARAPY (75 aa)). Positions 175, 217, and 219 each coordinate Mg(2+).

Belongs to the archaeal DnaG primase family. Forms a ternary complex with MCM helicase and DNA. Mg(2+) serves as cofactor.

It catalyses the reaction ssDNA + n NTP = ssDNA/pppN(pN)n-1 hybrid + (n-1) diphosphate.. In terms of biological role, RNA polymerase that catalyzes the synthesis of short RNA molecules used as primers for DNA polymerase during DNA replication. This chain is DNA primase DnaG, found in Methanococcus maripaludis (strain DSM 14266 / JCM 13030 / NBRC 101832 / S2 / LL).